The primary structure comprises 193 residues: Zinc finger protein AZF3 (193 aa).

2 C2H2-type zinc fingers span residues 75 to 97 (YKCGVCYKTFSSYQALGGHKASH) and 118 to 140 (HVCSVCGKSFATGQALGGHKRCH).

As to expression, expressed in roots.

The protein localises to the nucleus. Functionally, transcriptional repressor probably involved in abiotic stress responses. Binds DNA in a sequence-specific manner and can repress the transactivation activity of other transcription factors. This chain is Zinc finger protein AZF3 (AZF3), found in Arabidopsis thaliana (Mouse-ear cress).